The chain runs to 457 residues: Bifunctional protein GlmU (457 aa).

The tract at residues 1 to 229 (MSNSAKSVVI…HSEMEGVNNR (229 aa)) is pyrophosphorylase. UDP-N-acetyl-alpha-D-glucosamine contacts are provided by residues 11–14 (LAAG), Lys25, Gln76, 81–82 (GT), 103–105 (YGD), Gly140, Glu154, Asn169, and Asn227. Asp105 is a binding site for Mg(2+). Mg(2+) is bound at residue Asn227. Residues 230-250 (LQLAALERIYQTEQAERLLLE) form a linker region. An N-acetyltransferase region spans residues 251–457 (GVMLLDPARF…GWKRPVKKKQ (207 aa)). The UDP-N-acetyl-alpha-D-glucosamine site is built by Arg333 and Lys351. The active-site Proton acceptor is His363. Residues Tyr366 and Asn377 each contribute to the UDP-N-acetyl-alpha-D-glucosamine site. Residues Ala380, 386–387 (NY), Ser405, Ala423, and Arg440 contribute to the acetyl-CoA site.

This sequence in the N-terminal section; belongs to the N-acetylglucosamine-1-phosphate uridyltransferase family. It in the C-terminal section; belongs to the transferase hexapeptide repeat family. Homotrimer. The cofactor is Mg(2+).

Its subcellular location is the cytoplasm. It carries out the reaction alpha-D-glucosamine 1-phosphate + acetyl-CoA = N-acetyl-alpha-D-glucosamine 1-phosphate + CoA + H(+). The catalysed reaction is N-acetyl-alpha-D-glucosamine 1-phosphate + UTP + H(+) = UDP-N-acetyl-alpha-D-glucosamine + diphosphate. The protein operates within nucleotide-sugar biosynthesis; UDP-N-acetyl-alpha-D-glucosamine biosynthesis; N-acetyl-alpha-D-glucosamine 1-phosphate from alpha-D-glucosamine 6-phosphate (route II): step 2/2. It functions in the pathway nucleotide-sugar biosynthesis; UDP-N-acetyl-alpha-D-glucosamine biosynthesis; UDP-N-acetyl-alpha-D-glucosamine from N-acetyl-alpha-D-glucosamine 1-phosphate: step 1/1. It participates in bacterial outer membrane biogenesis; LPS lipid A biosynthesis. Its function is as follows. Catalyzes the last two sequential reactions in the de novo biosynthetic pathway for UDP-N-acetylglucosamine (UDP-GlcNAc). The C-terminal domain catalyzes the transfer of acetyl group from acetyl coenzyme A to glucosamine-1-phosphate (GlcN-1-P) to produce N-acetylglucosamine-1-phosphate (GlcNAc-1-P), which is converted into UDP-GlcNAc by the transfer of uridine 5-monophosphate (from uridine 5-triphosphate), a reaction catalyzed by the N-terminal domain. In Proteus mirabilis (strain HI4320), this protein is Bifunctional protein GlmU.